A 117-amino-acid polypeptide reads, in one-letter code: Large ribosomal subunit protein uL22c (117 aa).

This sequence belongs to the universal ribosomal protein uL22 family. In terms of assembly, part of the 50S ribosomal subunit.

It localises to the plastid. Its subcellular location is the chloroplast. In terms of biological role, this protein binds specifically to 23S rRNA. Its function is as follows. The globular domain of the protein is located near the polypeptide exit tunnel on the outside of the subunit, while an extended beta-hairpin is found that lines the wall of the exit tunnel in the center of the 70S ribosome. In Pyropia yezoensis (Susabi-nori), this protein is Large ribosomal subunit protein uL22c (rpl22).